We begin with the raw amino-acid sequence, 552 residues long: uncharacterized protein (552 aa).

29–36 (GENAWGKS) is an ATP binding site. A Toprim domain is found at 379 to 469 (RCWLLVEGET…AEREHLTALP (91 aa)).

This is an uncharacterized protein from Escherichia coli (strain K12).